Here is a 296-residue protein sequence, read N- to C-terminus: Phosphatidylglycerol--prolipoprotein diacylglyceryl transferase (296 aa).

4 helical membrane-spanning segments follow: residues 10–30 (IAFS…LAAF), 57–77 (LLFY…MLFY), 92–112 (VWEG…ACWL), and 119–139 (LHFF…LGFG). Arg-140 is an a 1,2-diacyl-sn-glycero-3-phospho-(1'-sn-glycerol) binding site. 3 consecutive transmembrane segments (helical) span residues 194-214 (QLYE…TFSM), 220-240 (YALS…VEFV), and 254-274 (WLTM…ALLA).

This sequence belongs to the Lgt family.

Its subcellular location is the cell inner membrane. It catalyses the reaction L-cysteinyl-[prolipoprotein] + a 1,2-diacyl-sn-glycero-3-phospho-(1'-sn-glycerol) = an S-1,2-diacyl-sn-glyceryl-L-cysteinyl-[prolipoprotein] + sn-glycerol 1-phosphate + H(+). It participates in protein modification; lipoprotein biosynthesis (diacylglyceryl transfer). Catalyzes the transfer of the diacylglyceryl group from phosphatidylglycerol to the sulfhydryl group of the N-terminal cysteine of a prolipoprotein, the first step in the formation of mature lipoproteins. This Xanthomonas oryzae pv. oryzae (strain MAFF 311018) protein is Phosphatidylglycerol--prolipoprotein diacylglyceryl transferase.